Consider the following 389-residue polypeptide: Packaging protein 3 (389 aa).

The interval 1–131 is interaction with packaging protein 1; the sequence is MHPVLRQMKP…VKAEVNFQTT (131 aa). Residues 350–389 are disordered; sequence EKENPDGSVSFQQHERGTQSHENGGHAEPAYSRRQLGRFY. The span at 362–374 shows a compositional bias: basic and acidic residues; it reads QHERGTQSHENGG.

This sequence belongs to the adenoviridae packaging protein 3 family. Part of the genome packaging complex composed of packaging proteins 1, 2 and 3; this complex specifically binds to the packaging sequence on the left end of viral genomic DNA and performs packaging of the viral genome. Interacts with hexon-linking protein IIIa; this interaction is required to promote correct genome packaging. Cleaved at different sites by the viral protease during virion maturation.

It localises to the host nucleus. Involved in viral genome packaging through its interaction with packaging proteins 1 and 2. After proteolytic cleavage by adenovirus protease, L1 52/55k protein is removed from the capsid during viral maturation. The protein is Packaging protein 3 of Canine adenovirus serotype 1 (strain CLL) (CAdV-1).